The chain runs to 530 residues: uncharacterized protein (530 aa).

The protein belongs to the protein kinase superfamily. ADCK protein kinase family.

This is an uncharacterized protein from Clostridium pasteurianum.